A 273-amino-acid chain; its full sequence is Shikimate dehydrogenase (NADP(+)) (273 aa).

Residues 15 to 17 and Thr62 contribute to the shikimate site; that span reads SQS. Lys66 (proton acceptor) is an active-site residue. Glu78 contributes to the NADP(+) binding site. Residues Asn87 and Asp102 each contribute to the shikimate site. Residues 127–131, 151–156, and Met215 each bind NADP(+); these read GAGGA and NRTVIK. Tyr217 lines the shikimate pocket. Gly239 is an NADP(+) binding site.

The protein belongs to the shikimate dehydrogenase family. Homodimer.

The catalysed reaction is shikimate + NADP(+) = 3-dehydroshikimate + NADPH + H(+). The protein operates within metabolic intermediate biosynthesis; chorismate biosynthesis; chorismate from D-erythrose 4-phosphate and phosphoenolpyruvate: step 4/7. In terms of biological role, involved in the biosynthesis of the chorismate, which leads to the biosynthesis of aromatic amino acids. Catalyzes the reversible NADPH linked reduction of 3-dehydroshikimate (DHSA) to yield shikimate (SA). The polypeptide is Shikimate dehydrogenase (NADP(+)) (Chromobacterium violaceum (strain ATCC 12472 / DSM 30191 / JCM 1249 / CCUG 213 / NBRC 12614 / NCIMB 9131 / NCTC 9757 / MK)).